Consider the following 214-residue polypeptide: Adenylate kinase (214 aa).

An ATP-binding site is contributed by 10 to 15 (GVGKGT). Residues 30-59 (STGDILRAAVKELTPMGAKAKGYMDSGALV) are NMP. AMP-binding positions include threonine 31, arginine 36, 57–59 (ALV), 85–88 (GFPR), and glutamine 92. Positions 126–163 (GRRACANCGAGYHVDFAPSKVAGVCDACSGQLVQREDD) are LID. Arginine 127 contacts ATP. Zn(2+) contacts are provided by cysteine 130, cysteine 133, cysteine 150, and cysteine 153. Residues arginine 160 and arginine 171 each contribute to the AMP site. Residue glycine 199 participates in ATP binding.

This sequence belongs to the adenylate kinase family. In terms of assembly, monomer.

The protein resides in the cytoplasm. It carries out the reaction AMP + ATP = 2 ADP. It functions in the pathway purine metabolism; AMP biosynthesis via salvage pathway; AMP from ADP: step 1/1. Its function is as follows. Catalyzes the reversible transfer of the terminal phosphate group between ATP and AMP. Plays an important role in cellular energy homeostasis and in adenine nucleotide metabolism. This is Adenylate kinase from Geobacter sp. (strain M21).